The primary structure comprises 180 residues: ATP-dependent protease subunit HslV (180 aa).

Thr6 is an active-site residue. Na(+)-binding residues include Ala164, Cys167, and Thr170.

The protein belongs to the peptidase T1B family. HslV subfamily. In terms of assembly, a double ring-shaped homohexamer of HslV is capped on each side by a ring-shaped HslU homohexamer. The assembly of the HslU/HslV complex is dependent on binding of ATP.

The protein resides in the cytoplasm. The enzyme catalyses ATP-dependent cleavage of peptide bonds with broad specificity.. Allosterically activated by HslU binding. Its function is as follows. Protease subunit of a proteasome-like degradation complex believed to be a general protein degrading machinery. In Borrelia hermsii (strain HS1 / DAH), this protein is ATP-dependent protease subunit HslV.